Here is a 249-residue protein sequence, read N- to C-terminus: tRNA (guanine-N(1)-)-methyltransferase (249 aa).

Residues G112 and 132–137 (LGDFVL) contribute to the S-adenosyl-L-methionine site.

This sequence belongs to the RNA methyltransferase TrmD family. Homodimer.

Its subcellular location is the cytoplasm. The catalysed reaction is guanosine(37) in tRNA + S-adenosyl-L-methionine = N(1)-methylguanosine(37) in tRNA + S-adenosyl-L-homocysteine + H(+). Specifically methylates guanosine-37 in various tRNAs. This chain is tRNA (guanine-N(1)-)-methyltransferase, found in Geobacter sp. (strain M21).